Consider the following 71-residue polypeptide: Brevinin-1SN2 (71 aa).

The signal sequence occupies residues 1-22 (MFTMKKSLLLIFFLGTINLSLC). A propeptide spans 23–45 (EEERNADEDEKRDGDDESDVEVQ) (removed in mature form). Residues cysteine 65 and cysteine 71 are joined by a disulfide bond.

This sequence belongs to the frog skin active peptide (FSAP) family. Brevinin subfamily. In terms of tissue distribution, expressed by the skin glands.

Its subcellular location is the secreted. Antimicrobial peptide. Active against a variety of Gram-negative and Gram-positive bacterial strains. Active against fungus C.glabrata 090902 and C.albicans ATCC 10231. Shows hemolytic activity against human erythrocytes. The sequence is that of Brevinin-1SN2 from Sylvirana spinulosa (Fine-spined frog).